Here is a 287-residue protein sequence, read N- to C-terminus: MKRIFLLIATNLAVLLVASIVMSILGVNTSTMGGLLVFAAIFGFGGAFISLAISKWMAKKTMGCEVITTPRDSTERWLVETVARQAKQAGIKMPEVAIYQSSDMNAFATGPSKDNSLVAVSTGLLYGMSQDEIEGVLAHEVSHVANGDMVTLTLIQGVVNTFVIFAARVVAGIINNFVSSNDEEGEGLGMFAYMAVVFVLDMLFGILASIIVAYFSRIREYKADEGAARLAGKGKMIAALERLRQGPESTAMPAQMSAFGINGKRSMAEMMMSHPPLEKRIAALRAS.

2 helical membrane-spanning segments follow: residues 4–24 and 33–53; these read IFLL…VMSI and GGLL…SLAI. A Zn(2+)-binding site is contributed by His-139. Residue Glu-140 is part of the active site. His-143 provides a ligand contact to Zn(2+). 2 helical membrane-spanning segments follow: residues 154–174 and 195–215; these read LIQG…AGII and AVVF…VAYF. Glu-220 serves as a coordination point for Zn(2+).

This sequence belongs to the peptidase M48B family. Requires Zn(2+) as cofactor.

The protein localises to the cell inner membrane. This Shewanella baltica (strain OS185) protein is Protease HtpX.